The chain runs to 503 residues: MEFSVKSGSPEKQRSACIVVGVFEPRRLSPIAEQLDKISDGYISALLRRGELEGKPGQTLLLHHVPNVLSERILLIGCGKERELDERQYKQVIQKTINTLNDTGSMEAVCFLTELHVKGRNNYWKVRQAVETAKETLYSFDQLKTNKSEPRRPLRKMVFNVPTRRELTSGERAILHGLAIAAAIKAAKDLGNMPPNICNAAYLASQARQLADSYSKNVITRVIGEQQMKELGMHSYLAVGQGSQNESLMSVIEYKGNASEDARPIVLVGKGLTFDSGGISIKPSEGMDEMKYDMCGAAAVYGVMRMVAELQLPINVIGVLAGCENMPGGRAYRPGDVLTTMSGQTVEVLNTDAEGRLVLCDVLTYVERFEPEAVIDVATLTGACVIALGHHITGLMANHNPLAHELIAASEQSGDRAWRLPLGDEYQEQLESNFADMANIGGRPGGAITAGCFLSRFTRKYNWAHLDIAGTAWRSGKAKGATGRPVALLAQFLLNRAGFNGEE.

Mn(2+)-binding residues include lysine 270 and aspartate 275. Lysine 282 is a catalytic residue. Residues aspartate 293, aspartate 352, and glutamate 354 each contribute to the Mn(2+) site. Arginine 356 is a catalytic residue.

The protein belongs to the peptidase M17 family. Mn(2+) is required as a cofactor.

It localises to the cytoplasm. The enzyme catalyses Release of an N-terminal amino acid, Xaa-|-Yaa-, in which Xaa is preferably Leu, but may be other amino acids including Pro although not Arg or Lys, and Yaa may be Pro. Amino acid amides and methyl esters are also readily hydrolyzed, but rates on arylamides are exceedingly low.. It carries out the reaction Release of an N-terminal amino acid, preferentially leucine, but not glutamic or aspartic acids.. In terms of biological role, presumably involved in the processing and regular turnover of intracellular proteins. Catalyzes the removal of unsubstituted N-terminal amino acids from various peptides. The protein is Probable cytosol aminopeptidase of Shigella boydii serotype 18 (strain CDC 3083-94 / BS512).